A 273-amino-acid chain; its full sequence is MSRLNINTKLVRRMLVGFLQDEIWKVGAKKAVLGLSGGIDSALVCHLAAEALGPENVHAICMPYRTSNPESEAHARLVAEASGVQFSVVGITPMVDAYFDQFPDANNMRRGNKMARERMTVLFDHSALYGGLVLGTSNKTELLLGYGTLYGDMASALNPIGDLYKTQVWQLSEEVGVPKPVIEKKPSADLWAGQTDEEELGFTYREVDELLYRMVDQRADTAELVAAGFKQEFVSSIYSKVQNSHFKRRLPVIAKVSGRTIDRDFRYSRDWGK.

34 to 41 (GLSGGIDS) contributes to the ATP binding site. Aspartate 40 lines the Mg(2+) pocket. Position 116 (arginine 116) interacts with deamido-NAD(+). Threonine 136 is a binding site for ATP. Glutamate 141 contributes to the Mg(2+) binding site. 2 residues coordinate ATP: lysine 165 and serine 187.

This sequence belongs to the NAD synthetase family. As to quaternary structure, homodimer.

The enzyme catalyses deamido-NAD(+) + NH4(+) + ATP = AMP + diphosphate + NAD(+) + H(+). Its pathway is cofactor biosynthesis; NAD(+) biosynthesis; NAD(+) from deamido-NAD(+) (ammonia route): step 1/1. Catalyzes the ATP-dependent amidation of deamido-NAD to form NAD. Uses ammonia as a nitrogen source. This is NH(3)-dependent NAD(+) synthetase from Trichlorobacter lovleyi (strain ATCC BAA-1151 / DSM 17278 / SZ) (Geobacter lovleyi).